The sequence spans 170 residues: Neurotensin/neuromedin N (170 aa).

The signal sequence occupies residues 1-23; sequence MMAGMKIQLVCMLLLAFSSWSLC. At Q151 the chain carries Pyrrolidone carboxylic acid.

This sequence belongs to the neurotensin family. Interacts with NTSR1. Interacts with SORT1. Interacts with SORL1. In terms of processing, neurotensin is cleaved and degraded by Angiotensin-converting enzyme (ACE) and neprilysin (MME).

It localises to the secreted. The protein localises to the cytoplasmic vesicle. The protein resides in the secretory vesicle. Neurotensin may play an endocrine or paracrine role in the regulation of fat metabolism. It causes contraction of smooth muscle. The chain is Neurotensin/neuromedin N (NTS) from Homo sapiens (Human).